The primary structure comprises 300 residues: tRNA uridine(34) hydroxylase (300 aa).

The 95-residue stretch at 128-222 (ADPEVIVVDT…YLEDVPQAQS (95 aa)) folds into the Rhodanese domain. Cysteine 182 serves as the catalytic Cysteine persulfide intermediate.

Belongs to the TrhO family.

The enzyme catalyses uridine(34) in tRNA + AH2 + O2 = 5-hydroxyuridine(34) in tRNA + A + H2O. In terms of biological role, catalyzes oxygen-dependent 5-hydroxyuridine (ho5U) modification at position 34 in tRNAs. The sequence is that of tRNA uridine(34) hydroxylase from Deinococcus radiodurans (strain ATCC 13939 / DSM 20539 / JCM 16871 / CCUG 27074 / LMG 4051 / NBRC 15346 / NCIMB 9279 / VKM B-1422 / R1).